Here is a 608-residue protein sequence, read N- to C-terminus: Glutamine--fructose-6-phosphate aminotransferase [isomerizing] (608 aa).

Cysteine 2 serves as the catalytic Nucleophile; for GATase activity. Positions 2–217 (CGIVGIVGNQ…DGDWAVIGKT (216 aa)) constitute a Glutamine amidotransferase type-2 domain. 2 consecutive SIS domains span residues 281-422 (ISDA…ARGT) and 456-598 (LSRE…VDQP). The active-site For Fru-6P isomerization activity is lysine 603.

As to quaternary structure, homodimer.

The protein localises to the cytoplasm. It catalyses the reaction D-fructose 6-phosphate + L-glutamine = D-glucosamine 6-phosphate + L-glutamate. Functionally, catalyzes the first step in hexosamine metabolism, converting fructose-6P into glucosamine-6P using glutamine as a nitrogen source. The polypeptide is Glutamine--fructose-6-phosphate aminotransferase [isomerizing] (Rhizobium meliloti (strain 1021) (Ensifer meliloti)).